We begin with the raw amino-acid sequence, 192 residues long: MNAIWIAVAAVSLLALAFGAILGYASRRFAVEDDPVVEKIDEILPQSQCGQCGYPGCRPYAEAISCNGEKINRCAPGGEAVMLKIAELLNVEPQPLDGEAQELTPARMVAVIDENNCIGCTKCIQACPVDAIVGATRAMHTVMSDLCTGCNLCVDPCPTHCISLQPVAETPDSWKWDLNTIPVRIIPVEHHA.

A hydrophobic region spans residues 1 to 26 (MNAIWIAVAAVSLLALAFGAILGYAS). A 4Fe-4S domain is found at 32–91 (EDDPVVEKIDEILPQSQCGQCGYPGCRPYAEAISCNGEKINRCAPGGEAVMLKIAELLNV). [4Fe-4S] cluster-binding residues include cysteine 49, cysteine 52, cysteine 57, cysteine 74, cysteine 117, cysteine 120, cysteine 123, cysteine 127, cysteine 147, cysteine 150, cysteine 153, and cysteine 157. 4Fe-4S ferredoxin-type domains follow at residues 108 to 137 (MVAV…GATR) and 138 to 167 (AMHT…LQPV).

The protein belongs to the 4Fe4S bacterial-type ferredoxin family. RnfB subfamily. In terms of assembly, the complex is composed of six subunits: RsxA, RsxB, RsxC, RsxD, RsxE and RsxG. The cofactor is [4Fe-4S] cluster.

It is found in the cell inner membrane. Part of a membrane-bound complex that couples electron transfer with translocation of ions across the membrane. Required to maintain the reduced state of SoxR. The polypeptide is Ion-translocating oxidoreductase complex subunit B (Escherichia coli O81 (strain ED1a)).